The chain runs to 399 residues: Tyrosine--tRNA ligase (399 aa).

The 'HIGH' region motif lies at 42 to 51 (PTAPDLHLGH). The 'KMSKS' region motif lies at 226–230 (KMSKS). Position 229 (lysine 229) interacts with ATP. The 62-residue stretch at 337–398 (IAIANLLKDA…GKRKFARITV (62 aa)) folds into the S4 RNA-binding domain.

This sequence belongs to the class-I aminoacyl-tRNA synthetase family. TyrS type 2 subfamily. In terms of assembly, homodimer.

It is found in the cytoplasm. It catalyses the reaction tRNA(Tyr) + L-tyrosine + ATP = L-tyrosyl-tRNA(Tyr) + AMP + diphosphate + H(+). In terms of biological role, catalyzes the attachment of tyrosine to tRNA(Tyr) in a two-step reaction: tyrosine is first activated by ATP to form Tyr-AMP and then transferred to the acceptor end of tRNA(Tyr). This is Tyrosine--tRNA ligase from Colwellia psychrerythraea (strain 34H / ATCC BAA-681) (Vibrio psychroerythus).